The following is a 301-amino-acid chain: Homoserine O-acetyltransferase (301 aa).

Cys142 serves as the catalytic Acyl-thioester intermediate. Residues Lys163 and Ser192 each contribute to the substrate site. The Proton acceptor role is filled by His235. Glu237 is an active-site residue. Arg249 provides a ligand contact to substrate.

It belongs to the MetA family.

It is found in the cytoplasm. It carries out the reaction L-homoserine + acetyl-CoA = O-acetyl-L-homoserine + CoA. It participates in amino-acid biosynthesis; L-methionine biosynthesis via de novo pathway; O-acetyl-L-homoserine from L-homoserine: step 1/1. Its function is as follows. Transfers an acetyl group from acetyl-CoA to L-homoserine, forming acetyl-L-homoserine. The sequence is that of Homoserine O-acetyltransferase from Succinatimonas hippei (strain DSM 22608 / JCM 16073 / KCTC 15190 / YIT 12066).